The primary structure comprises 369 residues: DNA replication and repair protein RecF (369 aa).

ATP is bound at residue 30-37 (GQNGMGKT).

Belongs to the RecF family.

The protein resides in the cytoplasm. The RecF protein is involved in DNA metabolism; it is required for DNA replication and normal SOS inducibility. RecF binds preferentially to single-stranded, linear DNA. It also seems to bind ATP. This is DNA replication and repair protein RecF from Bacteroides thetaiotaomicron (strain ATCC 29148 / DSM 2079 / JCM 5827 / CCUG 10774 / NCTC 10582 / VPI-5482 / E50).